The following is a 473-amino-acid chain: Hexaprenyl pyrophosphate synthase, mitochondrial (473 aa).

Residues Lys84, Arg87, and His186 each coordinate isopentenyl diphosphate. Residues Asp193 and Asp197 each coordinate Mg(2+). Residue Arg202 coordinates an all-trans-polyprenyl diphosphate. Arg203 is an isopentenyl diphosphate binding site. Residues Lys323, Thr324, Gln361, and Lys378 each coordinate an all-trans-polyprenyl diphosphate.

This sequence belongs to the FPP/GGPP synthase family. It depends on Mg(2+) as a cofactor.

The protein localises to the mitochondrion inner membrane. It functions in the pathway cofactor biosynthesis; ubiquinone biosynthesis. Its function is as follows. Assembly of polyisoprenoid side chains. The polyprenyl synthase of coenzyme Q biosynthesis catalyzes the formation from isopentenyl diphosphate of all trans-polyprenyl pyrophosphates generally ranging in length of between 6 and 10 isoprene units depending on the species. The sequence is that of Hexaprenyl pyrophosphate synthase, mitochondrial (COQ1) from Saccharomyces cerevisiae (strain ATCC 204508 / S288c) (Baker's yeast).